Here is a 234-residue protein sequence, read N- to C-terminus: Probable ascorbate-specific transmembrane electron transporter 1 (234 aa).

Residues 1 to 9 (MGLGVRAAP) are Cytoplasmic-facing. The chain crosses the membrane as a helical span at residues 10–30 (FTYVAHALAVAAATMVLVWCI). One can recognise a Cytochrome b561 domain in the interval 13–217 (VAHALAVAAA…FGASVVVAAV (205 aa)). Residues 31-48 (HFRGGLAFEATNKNLIFN) are Extracellular-facing. A helical membrane pass occupies residues 49-69 (VHPVLMLIGYIILGSEAIMVY). H50 contributes to the heme b binding site. 65–73 (AIMVYKVLP) lines the L-ascorbate pocket. The Cytoplasmic segment spans residues 70–82 (KVLPTWKHDTTKL). Residues 83–103 (IHLILHAIALVFGAVGIYCAF) form a helical membrane-spanning segment. H84 and H118 together coordinate heme b. The Extracellular segment spans residues 104 to 121 (KFHNESGIANLYSLHSWL). 114-123 (LYSLHSWLGI) is a monodehydro-L-ascorbate radical binding site. A helical membrane pass occupies residues 122–142 (GIGTICLYGIQWIFGFVAFFF). The Cytoplasmic segment spans residues 143 to 151 (PRASPSVRK). A helical membrane pass occupies residues 152–172 (GVLPWHILFGLFVYILALATA). A heme b-binding site is contributed by H157. At 173 to 194 (ELGFLEKLTFLQSSGLDKYGAE) the chain is on the extracellular side. Residues 195-215 (AFLVNFTALIVVLFGASVVVA) traverse the membrane as a helical segment. Over 216 to 234 (AVSPARVEEPHEYAPIPES) the chain is Cytoplasmic.

Heme b serves as cofactor.

It is found in the membrane. In terms of biological role, two-heme-containing cytochrome. Catalyzes ascorbate-dependent trans-membrane electron transfer by utilizing a concerted H(+)/e(-) transfer mechanism. The polypeptide is Probable ascorbate-specific transmembrane electron transporter 1 (Oryza sativa subsp. japonica (Rice)).